The primary structure comprises 205 residues: Variable small protein 11 (205 aa).

The N-terminal stretch at M1–S18 is a signal peptide. C19 carries N-palmitoyl cysteine lipidation. The S-diacylglycerol cysteine moiety is linked to residue C19.

The protein belongs to the variable small protein (Vsp) family.

The protein localises to the cell outer membrane. The Vlp and Vsp proteins are antigenically distinct proteins, only one vlp or vsp gene is transcriptionally active at any one time. Switching between these genes is a mechanism of host immune response evasion. The polypeptide is Variable small protein 11 (Borrelia hermsii).